The chain runs to 302 residues: Ribonucleoside-diphosphate reductase small subunit (302 aa).

Residues E61, E91, and H94 each contribute to the Fe cation site. The active site involves Y98. Residues 147–167 (ILVFLLIEGIFFISSFYSIAL) traverse the membrane as a helical segment. Fe cation contacts are provided by E154, E188, and H191.

It belongs to the ribonucleoside diphosphate reductase small chain family. As to quaternary structure, heterotetramer composed of a homodimer of the large subunit (R1) and a homodimer of the small subunit (R2). Larger multisubunit protein complex are also active, composed of (R1)n(R2)n. Fe cation serves as cofactor.

It is found in the host membrane. The enzyme catalyses a 2'-deoxyribonucleoside 5'-diphosphate + [thioredoxin]-disulfide + H2O = a ribonucleoside 5'-diphosphate + [thioredoxin]-dithiol. Ribonucleoside-diphosphate reductase holoenzyme provides the precursors necessary for viral DNA synthesis. Allows virus growth in non-dividing cells, as well as reactivation from latency in infected hosts. Catalyzes the biosynthesis of deoxyribonucleotides from the corresponding ribonucleotides. The sequence is that of Ribonucleoside-diphosphate reductase small subunit from Homo sapiens (Human).